A 1106-amino-acid polypeptide reads, in one-letter code: Carbamoyl phosphate synthase large chain (1106 aa).

The carboxyphosphate synthetic domain stretch occupies residues 1–401; the sequence is MPKRNDLNKV…AFLKALRSLE (401 aa). ATP-binding residues include R129, R169, G175, G176, R208, V210, E215, G241, V242, H243, Q284, and E298. The ATP-grasp 1 domain maps to 133–327; it reads KTTMNDIGEP…IARVASKIAI (195 aa). Positions 284, 298, and 300 each coordinate Mg(2+). Mn(2+) contacts are provided by Q284, E298, and N300. The tract at residues 402–577 is oligomerization domain; sequence IDLDDLHQSI…YSAYNEENEA (176 aa). Residues 578–964 are carbamoyl phosphate synthetic domain; the sequence is IPPSEPTHDK…ALYKAMLASG (387 aa). Residues 706 to 896 enclose the ATP-grasp 2 domain; sequence DQLLNKLGID…MVKIATKAMM (191 aa). ATP contacts are provided by R742, Q781, L783, E787, G812, V813, H814, S815, Q855, and E867. 3 residues coordinate Mg(2+): Q855, E867, and N869. Positions 855, 867, and 869 each coordinate Mn(2+). An MGS-like domain is found at 965-1106; that stretch reads FSINLNGGVL…LQDYLKELSN (142 aa). The tract at residues 965–1106 is allosteric domain; sequence FSINLNGGVL…LQDYLKELSN (142 aa).

It belongs to the CarB family. As to quaternary structure, composed of two chains; the small (or glutamine) chain promotes the hydrolysis of glutamine to ammonia, which is used by the large (or ammonia) chain to synthesize carbamoyl phosphate. Tetramer of heterodimers (alpha,beta)4. The cofactor is Mg(2+). Mn(2+) is required as a cofactor.

The enzyme catalyses hydrogencarbonate + L-glutamine + 2 ATP + H2O = carbamoyl phosphate + L-glutamate + 2 ADP + phosphate + 2 H(+). It catalyses the reaction hydrogencarbonate + NH4(+) + 2 ATP = carbamoyl phosphate + 2 ADP + phosphate + 2 H(+). The protein operates within amino-acid biosynthesis; L-arginine biosynthesis; carbamoyl phosphate from bicarbonate: step 1/1. It participates in pyrimidine metabolism; UMP biosynthesis via de novo pathway; (S)-dihydroorotate from bicarbonate: step 1/3. Large subunit of the glutamine-dependent carbamoyl phosphate synthetase (CPSase). CPSase catalyzes the formation of carbamoyl phosphate from the ammonia moiety of glutamine, carbonate, and phosphate donated by ATP, constituting the first step of 2 biosynthetic pathways, one leading to arginine and/or urea and the other to pyrimidine nucleotides. The large subunit (synthetase) binds the substrates ammonia (free or transferred from glutamine from the small subunit), hydrogencarbonate and ATP and carries out an ATP-coupled ligase reaction, activating hydrogencarbonate by forming carboxy phosphate which reacts with ammonia to form carbamoyl phosphate. The protein is Carbamoyl phosphate synthase large chain of Natranaerobius thermophilus (strain ATCC BAA-1301 / DSM 18059 / JW/NM-WN-LF).